Consider the following 79-residue polypeptide: U-myrmeciitoxin(01)-Mg9a (79 aa).

A signal peptide spans 1 to 21 (MKLSCLLLTLAIIFVLTIVHA). A propeptide spanning residues 22–48 (PNVEAKALANPESDAIGFADAVGEADP) is cleaved from the precursor. Glutamine 78 carries the glutamine amide modification.

In terms of tissue distribution, expressed by the venom gland.

It localises to the secreted. In terms of biological role, may have antimicrobial properties, like most ant linear peptides. This is U-myrmeciitoxin(01)-Mg9a from Myrmecia gulosa (Red bulldog ant).